The chain runs to 204 residues: Peptide chain release factor homolog (204 aa).

The segment at 2 to 98 is rRNA-recognition domain, N-terminus; it reads ILLQLSSAQG…KNWFLGIGRF (97 aa). Residues 99-107 are linker 1; that stretch reads TADEQEQSD. The tract at residues 108–161 is GGQ domain; the sequence is AIRYETLRSSGPGGQHVNKTDSAVRATHLASGISVKVQSERSQHANKRLARLLI. The GGQ motif signature appears at 120–122; that stretch reads GGQ. A linker 2 region spans residues 162 to 179; it reads AWKLEQQQQENSAALKSQ. The interval 180 to 204 is rRNA-recognition domain, C-terminus; sequence RRMFHHQIERGNPRRTFTGMAFIEG.

It belongs to the prokaryotic/mitochondrial release factor family. Found in the A site of damaged 70S ribosomes, but not in undamaged ribosomes. Contacts (damaged) 16S rRNA, 23S rRNA and ribosomal protein uS12, but not mRNA.

Functionally, peptide chain release-like factor that acts on 70S ribosomes with specific damage to their decoding center (cleavage of 16S rRNA between adenine-1493 and guanosine-1494, E.coli 16S rRNA numbering). Probably acts as a peptidyl-tRNA hydrolase, allowing release of the nascent chain and dissociation of the 30S and 50S subunits. Can release mRNA as short as 19 nucleotides (nt, mRNA-19, which has a single amino acid in the P-site and only a single nt in the A-site) from the ribosome. This specific cleavage is inflicted by CdiA (ECL_04451) or by colicin E3-type (ColE3) proteins. In vivo the PrfH-RtcB2 pair restores growth in the presence of ribotoxins that specifically create this damage. In Escherichia coli (strain ATCC 25922 / DSM 1103 / LMG 8223 / NCIMB 12210 / NCTC 12241 / WDCM 00013 / Seattle 1946), this protein is Peptide chain release factor homolog.